Here is a 418-residue protein sequence, read N- to C-terminus: Gamma-glutamyl phosphate reductase (418 aa).

The protein belongs to the gamma-glutamyl phosphate reductase family.

It is found in the cytoplasm. The catalysed reaction is L-glutamate 5-semialdehyde + phosphate + NADP(+) = L-glutamyl 5-phosphate + NADPH + H(+). It functions in the pathway amino-acid biosynthesis; L-proline biosynthesis; L-glutamate 5-semialdehyde from L-glutamate: step 2/2. Catalyzes the NADPH-dependent reduction of L-glutamate 5-phosphate into L-glutamate 5-semialdehyde and phosphate. The product spontaneously undergoes cyclization to form 1-pyrroline-5-carboxylate. The chain is Gamma-glutamyl phosphate reductase from Lacticaseibacillus paracasei (strain ATCC 334 / BCRC 17002 / CCUG 31169 / CIP 107868 / KCTC 3260 / NRRL B-441) (Lactobacillus paracasei).